Here is a 496-residue protein sequence, read N- to C-terminus: Protein nucleotidyltransferase YdiU (496 aa).

Glycine 98, glycine 100, arginine 101, lysine 116, aspartate 128, glycine 129, arginine 179, and arginine 186 together coordinate ATP. Aspartate 259 (proton acceptor) is an active-site residue. Positions 260 and 269 each coordinate Mg(2+). Position 269 (aspartate 269) interacts with ATP.

This sequence belongs to the SELO family. Mg(2+) serves as cofactor. It depends on Mn(2+) as a cofactor.

The enzyme catalyses L-seryl-[protein] + ATP = 3-O-(5'-adenylyl)-L-seryl-[protein] + diphosphate. It catalyses the reaction L-threonyl-[protein] + ATP = 3-O-(5'-adenylyl)-L-threonyl-[protein] + diphosphate. It carries out the reaction L-tyrosyl-[protein] + ATP = O-(5'-adenylyl)-L-tyrosyl-[protein] + diphosphate. The catalysed reaction is L-histidyl-[protein] + UTP = N(tele)-(5'-uridylyl)-L-histidyl-[protein] + diphosphate. The enzyme catalyses L-seryl-[protein] + UTP = O-(5'-uridylyl)-L-seryl-[protein] + diphosphate. It catalyses the reaction L-tyrosyl-[protein] + UTP = O-(5'-uridylyl)-L-tyrosyl-[protein] + diphosphate. In terms of biological role, nucleotidyltransferase involved in the post-translational modification of proteins. It can catalyze the addition of adenosine monophosphate (AMP) or uridine monophosphate (UMP) to a protein, resulting in modifications known as AMPylation and UMPylation. The sequence is that of Protein nucleotidyltransferase YdiU from Albidiferax ferrireducens (strain ATCC BAA-621 / DSM 15236 / T118) (Rhodoferax ferrireducens).